A 907-amino-acid polypeptide reads, in one-letter code: Sensor protein GacS (907 aa).

The next 3 helical transmembrane spans lie at 9-25, 84-101, and 159-178; these read ASLM…WMQL, VLAH…IGSG, and LFAS…TLAV. The 53-residue stretch at 182 to 234 folds into the HAMP domain; it reads RTINGPMSQIKQAVSQLKDGNLETRLPPLGSRELDELASGINRMAATLQNAQE. One can recognise a Histidine kinase domain in the interval 281-502; sequence NMSHEIRTPL…EFWISLKLPK (222 aa). A Phosphohistidine; by autocatalysis modification is found at His-284. The Response regulatory domain maps to 658–777; the sequence is RVLCVDDNPA…QLAQVVLKWT (120 aa). The residue at position 707 (Asp-707) is a 4-aspartylphosphate. Residues 814–907 enclose the HPt domain; the sequence is KADLAADMLA…RLEAEARVMA (94 aa). Position 853 is a phosphohistidine (His-853).

Post-translationally, activation requires a sequential transfer of a phosphate group from a His in the primary transmitter domain, to an Asp in the receiver domain and to a His in the secondary transmitter domain.

The protein resides in the cell inner membrane. The enzyme catalyses ATP + protein L-histidine = ADP + protein N-phospho-L-histidine.. In terms of biological role, forms part of a two-component regulatory system GacA/GacS(LemA). May be involved in lesion formation, swarming and in the production of extracellular protease, syringomycin and N-acyl-L-homoserine lactone (acyl-HSL). Required for pathogenicity on bean. The chain is Sensor protein GacS (gacS) from Pseudomonas syringae pv. syringae.